The following is a 164-amino-acid chain: Transcription factor MafF (164 aa).

The basic motif stretch occupies residues 51–76; the sequence is RLKQRRRTLKNRGYAASCRVKRVCQK. One can recognise a bZIP domain in the interval 51–114; the sequence is RLKQRRRTLK…DALRGKCEAL (64 aa). The tract at residues 79 to 93 is leucine-zipper; the sequence is LQKQKSELEREVDKL. Residues 141–164 are disordered; the sequence is KSTPGSGSGPAHGPDPAHGPASCS. The span at 149–164 shows a compositional bias: low complexity; that stretch reads GPAHGPDPAHGPASCS.

It belongs to the bZIP family. Maf subfamily. As to quaternary structure, monomer and homo- or heterodimer. Interacts with MIP. Forms high affinity heterodimers with members of the CNC-bZIP family such as NFE2L1/NRF1. In terms of tissue distribution, expressed in the term myometrium and kidney.

It localises to the nucleus. Its function is as follows. Since they lack a putative transactivation domain, the small Mafs behave as transcriptional repressors when they dimerize among themselves. However, they seem to serve as transcriptional activators by dimerizing with other (usually larger) basic-zipper proteins, such as NFE2L1/NRF1, and recruiting them to specific DNA-binding sites. Interacts with the upstream promoter region of the oxytocin receptor gene. May be a transcriptional enhancer in the up-regulation of the oxytocin receptor gene at parturition. The polypeptide is Transcription factor MafF (MAFF) (Homo sapiens (Human)).